The chain runs to 1615 residues: Ferredoxin-dependent glutamate synthase, chloroplastic (1615 aa).

Residues 1-52 (MATLPRAAAAAAPSPAAALLPLPRAAPLLAGRAAARSAARRLRARGTRAPPL) constitute a chloroplast transit peptide. C97 serves as the catalytic Nucleophile. A Glutamine amidotransferase type-2 domain is found at 97–496 (CGVGFVANLK…PGMMITVDLQ (400 aa)). 1175 to 1232 (LSETHQTLIQNGLRERVVLRVDGGFRSGLDVLMAAAMGADEYGFGSVAMIATGCVMAR) is a binding site for FMN. C1228, C1234, and C1239 together coordinate [3Fe-4S] cluster.

Belongs to the glutamate synthase family. Requires [3Fe-4S] cluster as cofactor. The cofactor is FAD. FMN is required as a cofactor. In terms of tissue distribution, expressed in leaf blades and at lower levels in roots.

It localises to the plastid. It is found in the chloroplast. The enzyme catalyses 2 oxidized [2Fe-2S]-[ferredoxin] + 2 L-glutamate = L-glutamine + 2 reduced [2Fe-2S]-[ferredoxin] + 2-oxoglutarate + 2 H(+). It participates in amino-acid biosynthesis; L-glutamate biosynthesis via GLT pathway; L-glutamate from 2-oxoglutarate and L-glutamine (ferredoxin route): step 1/1. Its pathway is energy metabolism; nitrogen metabolism. In terms of biological role, involved in glutamate biosynthesis in leaf. Required for the reassimilation of ammonium ions generated during photorespiration. In Oryza sativa subsp. japonica (Rice), this protein is Ferredoxin-dependent glutamate synthase, chloroplastic (GLU).